The chain runs to 130 residues: Small ribosomal subunit protein uS9 (130 aa).

Belongs to the universal ribosomal protein uS9 family.

This chain is Small ribosomal subunit protein uS9 (rpsI), found in Shigella flexneri.